Here is a 515-residue protein sequence, read N- to C-terminus: Maturase K (515 aa).

The protein belongs to the intron maturase 2 family. MatK subfamily.

It localises to the plastid. The protein resides in the chloroplast. In terms of biological role, usually encoded in the trnK tRNA gene intron. Probably assists in splicing its own and other chloroplast group II introns. The sequence is that of Maturase K from Cedrus deodara (Deodar cedar).